We begin with the raw amino-acid sequence, 652 residues long: MAPGEKIKAKIKKNLPVTGPQAPNIKELMQWYCLNTNTHGCRRIVVSRGRLRRLLWILFTLTAVALIFWQCALLISSFYTVSVSIKVHFQKLDFPAVTICNINPYKYSAVRHLLADLEQETRAALKTLYGFSEITSRKRREAQSWSSVRKGTDPKFLNLAPLMAFEKGDTGKARDFFTGRKRKVNARIIHKASDVMHIHNSKEVVGFQLCSNDTSDCAVYTFSSGVNAIQEWYKLHYMNIMAQVSQEKKINMSYSADELLVTCFFDGVSCDARNFTLFHHPMYGNCYTFNNRQNETILSTSMGGSEFGLQVILYINEEEYNPFLVSSTGAKVIIHRQDEYPFVEDVGTEIETAMATSIGMHLTESFKLSDPYSQCTEDWSDVQITNIYNATYSLQICLHSCFQAKMVENCGCAQYSQPLPRGADYCNYQQHPNWMYCYYQLHQAFVREELGCQSVCKEACSFKEWTLTTSLAQWPSEVSEKWLLSILTWDQSQQIKKKLNKTDLAKLLIFYKDLNQRSIMENPANSIEQLLSNIGGQLGLWMSCSVVCVIEIIEVFFIDSLSIIARHQWHKAKGWWARRRAPACPEAPRAPQGRDNPSLDIDDDLPTFTSALSLPPAPGSQVPGTPPPRYNTLRLERAFSSQLTDTQTTFPH.

At 1 to 54 (MAPGEKIKAKIKKNLPVTGPQAPNIKELMQWYCLNTNTHGCRRIVVSRGRLRRL) the chain is on the cytoplasmic side. The helical transmembrane segment at 55-75 (LWILFTLTAVALIFWQCALLI) threads the bilayer. Residues 76 to 537 (SSFYTVSVSI…EQLLSNIGGQ (462 aa)) lie on the Extracellular side of the membrane. Disulfide bonds link Cys-100-Cys-286, Cys-210-Cys-217, Cys-263-Cys-270, Cys-375-Cys-460, Cys-397-Cys-456, Cys-401-Cys-452, Cys-410-Cys-437, and Cys-412-Cys-426. Residues 137 to 224 (RKRREAQSWS…SDCAVYTFSS (88 aa)) form a gating release of inhibition by proteolysis (GRIP); protease-sensitive region that is responsible for the proteolytic activation of the channel region. N-linked (GlcNAc...) asparagine glycosylation occurs at Asn-212. Asn-500 carries an N-linked (GlcNAc...) asparagine glycan. Residues 538–558 (LGLWMSCSVVCVIEIIEVFFI) traverse the membrane as a helical segment. At 559 to 652 (DSLSIIARHQ…LTDTQTTFPH (94 aa)) the chain is on the cytoplasmic side. Residues 610-631 (SALSLPPAPGSQVPGTPPPRYN) are disordered. The PY motif; recruits WW domain-containing proteins and is thereby required for ubiquitination and inhibition of the channel by NEDD4 and NEDD4L signature appears at 626-630 (PPPRY).

This sequence belongs to the amiloride-sensitive sodium channel (TC 1.A.6) family. SCNN1G subfamily. As to quaternary structure, component of the heterotrimeric epithelial sodium channel (ENaC) composed of an alpha/SCNN1A, a beta/SCNN1B and a gamma/SCNN1G subunit. An additional delta/SCNN1D subunit can replace the alpha/SCNN1A subunit to form an alternative channel with specific properties. Interacts with WWP1 (via WW domains). Interacts with WWP2 (via WW domains); inhibits the channel. Interacts with the full-length immature form of PCSK9 (pro-PCSK9); inhibits ENaC by promoting its proteasomal degradation. Interacts with BPIFA1; the interaction is indirect via SCNN1B and inhibits the proteolytic maturation of SCNN1A and SCNN1G and the activation of ENaC. In terms of processing, phosphorylated on serine and threonine residues. Aldosterone and insulin increase the basal level of phosphorylation. Post-translationally, ubiquitinated. Can be ubiquitinated at multiple sites and undergo monoubiquitination and polyubiquitination. Ubiquitination by NEDD4 or NEDD4L inhibits the ENaC channel through endocytosis, intracellular retention and degradation of its individual subunits. ENaC is activated through the proteolytic maturation of its subunits. Furin cleaves the SCNN1G subunit first, followed by cleavage by prostasin (PRSS8), which results in a stepwise increase in the open probability of the channel due to the release of an inhibitory tract. BPIFA1, which is recruited by the SCNN1B subunit, prevents the proteolytic activation of ENaC. In terms of processing, N-glycosylated. N-linked glycans are processed to complex type during ENaC complex assembly and transport to the plasma membrane.

The protein localises to the apical cell membrane. The catalysed reaction is Na(+)(in) = Na(+)(out). Its activity is regulated as follows. Originally identified and characterized by its inhibition by the diuretic drug amiloride. Its function is as follows. This is one of the three pore-forming subunits of the heterotrimeric epithelial sodium channel (ENaC), a critical regulator of sodium balance and fluid homeostasis. ENaC operates in epithelial tissues, where it mediates the electrodiffusion of sodium ions from extracellular fluid through the apical membrane of cells, with water following osmotically. It plays a key role in maintaining sodium homeostasis through electrogenic sodium reabsorption in the kidneys. Additionally, ENaC is essential for airway surface liquid homeostasis, which is crucial for proper mucus clearance. The chain is Epithelial sodium channel subunit gamma from Bos taurus (Bovine).